The sequence spans 341 residues: HTH-type transcriptional repressor PurR (341 aa).

In terms of domain architecture, HTH lacI-type spans 2 to 56 (ATIKDVAKHAGVSTTTVSHVINKTRFVAENTKAAVWAAIKELHYSPSAVARSLKV). Positions 4–23 (IKDVAKHAGVSTTTVSHVIN) form a DNA-binding region, H-T-H motif. Residues 48–56 (SAVARSLKV) mediate DNA binding. Hypoxanthine is bound by residues tyrosine 73, arginine 190, threonine 192, phenylalanine 221, and aspartate 275.

Homodimer.

Its pathway is purine metabolism; purine nucleotide biosynthesis [regulation]. Functionally, is the main repressor of the genes involved in the de novo synthesis of purine nucleotides, regulating purB, purC, purEK, purF, purHD, purL, purMN and guaBA expression. PurR is allosterically activated to bind its cognate DNA by binding the purine corepressors, hypoxanthine or guanine, thereby effecting transcription repression. This chain is HTH-type transcriptional repressor PurR, found in Yersinia pseudotuberculosis serotype O:1b (strain IP 31758).